The primary structure comprises 477 residues: Calcium uptake protein 1, mitochondrial (477 aa).

The transit peptide at 1–33 directs the protein to the mitochondrion; the sequence is MFRLNTLSALAELAVGSRWYHGASQPTQTKRRL. The interval 57–107 is disordered; sequence AESPPCVNSKKPDTEDKERNKDSGEVSSREGRAADAAAEPYPEDKKKKRSG. Basic and acidic residues predominate over residues 66–89; sequence KKPDTEDKERNKDSGEVSSREGRA. Residues 101–112 form a polybasic region region; it reads KKKKRSGFRDRK. At S124 the chain carries Phosphoserine; by PKB. The tract at residues 128-131 is k/R-ring; the sequence is KIFR. Positions 220 to 255 constitute an EF-hand 1 domain; it reads TPQRNFEIAFKMFDLNGDGEVDMEEFEQVQSIIRSQ. Ca(2+) contacts are provided by D233, N235, D237, E239, and E244. The tract at residues 261–265 is k/R-ring; the sequence is RHRDR. One can recognise an EF-hand 2; degenerate domain in the interval 356–376; it reads KDGKGLTFQEVENFFTFLKNI. Residues 410 to 445 enclose the EF-hand 3 domain; that stretch reads LSDHVCDVVFALFDCDGNGELSNKEFVSIMKQRLMR. Ca(2+) contacts are provided by D423, D425, N427, E429, and E434. R457 carries the post-translational modification Asymmetric dimethylarginine. The C-helix region stretch occupies residues 457–467; sequence RLMQAMWKCAQ.

It belongs to the MICU1 family. MICU1 subfamily. Heterodimer; disulfide-linked; heterodimerizes with MICU2 or MICU3. Homodimer; disulfide-linked. Component of the uniplex complex, composed of MCU, EMRE/SMDT1, MICU1 and MICU2 (or MICU3) in a 4:4:1:1 stoichiometry. The composition of calcium sensors within the uniplex complex can differ depending on tissues: a MICU1 homodimer can be present instead of the MICU1-MICU2 heterodimer in skeletal-muscle and kidney. MICU1 is recruited to the uniplex complex by EMRE/SMDT1, and it associates with MCU at low calcium levels, occluding the pore of the MCU channel. Associates with the MICOS complex. Interacts with SLC25A23. Interacts with CHCHD4/MIA40; which introduces the interchain disulfide bond with MICU2. Interacts (when methylated) with UCP2; leading to decrease the calcium sensitivity of MICU1. As to quaternary structure, heterodimer; disulfide-linked; heterodimerizes with MICU2 or MICU3. Heterodimerizes with MICU3 in skeletal muscle. Component of the uniplex complex, composed of MCU, EMRE/SMDT1, MICU1 and MICU2 (or MICU3) in a 4:4:1:1 stoichiometry. Also localizes to mitochondrial cristae junctions. In terms of processing, phosphorylation at Ser-124 by AKT1 impairs its maturation and stability. Post-translationally, asymmetric dimethylation at Arg-457 by PRMT1 decreases the calcium sensitivity of MICU1 by promoting interaction with UCP2. Degraded by YME1L1 when not complexed as homodimer or heterodimer. Not degraded when complexed as homodimer or heterodimer; the presence of the interchain disulfide bond protecting MICU1 from degradation by YME1L1. Expressed in skeletal muscle, heart, kidney, liver, brain, lung, fat and spleen. As to expression, specifically expressed in the skeletal muscle.

Its subcellular location is the mitochondrion intermembrane space. It localises to the mitochondrion inner membrane. In terms of biological role, calcium sensor of the mitochondrial calcium uniporter (MCU) channel, which senses calcium level via its EF-hand domains. MICU1 and MICU2 (or MICU3) form a disulfide-linked heterodimer that stimulates and inhibits MCU activity, depending on the concentration of calcium. At low calcium levels, MICU1 occludes the pore of the MCU channel, preventing mitochondrial calcium uptake. At higher calcium levels, calcium-binding to MICU1 and MICU2 (or MICU3) induces a conformational change that weakens MCU-MICU1 interactions and moves the MICU1-MICU2 heterodimer away from the pore, allowing calcium permeation through the MCU channel. Also required to protect against manganese toxicity by preventing manganese uptake by MCU: mechanistically, manganese-binding to its EF-hand domains does not induce any conformational change, maintaining MCU pore occlusion. Acts as a regulator of mitochondrial cristae structure independently of its ability to regulate the mitochondrial calcium uniporter channel. Regulates glucose-dependent insulin secretion in pancreatic beta-cells by regulating mitochondrial calcium uptake. Induces T-helper 1-mediated autoreactivity, which is accompanied by the release of IFNG. Functionally, isoform that regulates mitochondrial calcium uniporter (MCU) in the skeletal muscle. Compared to other isoforms, this isoform has higher affinity for calcium, promoting mitochondrial calcium uptake at lower calcium concentrations. This allows a rapid response of mitochondrial metabolism and ensures sustained ATP production needed for resistance and strenuous exercise. The chain is Calcium uptake protein 1, mitochondrial from Mus musculus (Mouse).